A 181-amino-acid polypeptide reads, in one-letter code: Protein GrpE (181 aa).

Residues 1-21 are disordered; the sequence is MNKEQQDLQTEQEAAVETAEL. The span at 8–21 shows a compositional bias: low complexity; that stretch reads LQTEQEAAVETAEL.

Belongs to the GrpE family. As to quaternary structure, homodimer.

It is found in the cytoplasm. Functionally, participates actively in the response to hyperosmotic and heat shock by preventing the aggregation of stress-denatured proteins, in association with DnaK and GrpE. It is the nucleotide exchange factor for DnaK and may function as a thermosensor. Unfolded proteins bind initially to DnaJ; upon interaction with the DnaJ-bound protein, DnaK hydrolyzes its bound ATP, resulting in the formation of a stable complex. GrpE releases ADP from DnaK; ATP binding to DnaK triggers the release of the substrate protein, thus completing the reaction cycle. Several rounds of ATP-dependent interactions between DnaJ, DnaK and GrpE are required for fully efficient folding. This Trichlorobacter lovleyi (strain ATCC BAA-1151 / DSM 17278 / SZ) (Geobacter lovleyi) protein is Protein GrpE.